The chain runs to 209 residues: uncharacterized protein (209 aa).

The 67-residue stretch at 1-67 (MEILPKYKPE…LIMYNYWTID (67 aa)) folds into the MPN domain. Zn(2+) contacts are provided by His-17, His-19, and Asp-30. A JAMM motif motif is present at residues 17-30 (HTHPKGPAEPSIND).

This is an uncharacterized protein from Acidianus convivator (ATV).